We begin with the raw amino-acid sequence, 129 residues long: Phosphoribosyl-AMP cyclohydrolase (129 aa).

Asp86 serves as a coordination point for Mg(2+). Residue Cys87 participates in Zn(2+) binding. Mg(2+) contacts are provided by Asp88 and Asp90. Zn(2+)-binding residues include Cys104 and Cys111.

This sequence belongs to the PRA-CH family. In terms of assembly, homodimer. Requires Mg(2+) as cofactor. The cofactor is Zn(2+).

Its subcellular location is the cytoplasm. The enzyme catalyses 1-(5-phospho-beta-D-ribosyl)-5'-AMP + H2O = 1-(5-phospho-beta-D-ribosyl)-5-[(5-phospho-beta-D-ribosylamino)methylideneamino]imidazole-4-carboxamide. It functions in the pathway amino-acid biosynthesis; L-histidine biosynthesis; L-histidine from 5-phospho-alpha-D-ribose 1-diphosphate: step 3/9. Functionally, catalyzes the hydrolysis of the adenine ring of phosphoribosyl-AMP. The chain is Phosphoribosyl-AMP cyclohydrolase from Ignicoccus hospitalis (strain KIN4/I / DSM 18386 / JCM 14125).